An 820-amino-acid chain; its full sequence is DNA replication helicase (820 aa).

An ATP-binding site is contributed by 90-97 (GTAGAGKT).

Belongs to the herpesviridae helicase family. Associates with the primase and the primase-associated factor to form the helicase-primase complex.

Its subcellular location is the host nucleus. In terms of biological role, component of the helicase/primase complex. Unwinds the DNA at the replication forks and generates single-stranded DNA for both leading and lagging strand synthesis. The primase synthesizes short RNA primers on the lagging strand that the polymerase elongates using dNTPs. Possesses helicase-like motifs and therefore may act as the helicase subunit of the complex. In Human herpesvirus 7 (strain JI) (HHV-7), this protein is DNA replication helicase.